Consider the following 289-residue polypeptide: Pantothenate synthetase (289 aa).

An ATP-binding site is contributed by M30–H37. The active-site Proton donor is H37. Residue Q61 participates in (R)-pantoate binding. Q61 lines the beta-alanine pocket. G147–D150 serves as a coordination point for ATP. (R)-pantoate is bound at residue Q153. ATP-binding positions include V176 and C184–R187.

Belongs to the pantothenate synthetase family. In terms of assembly, homodimer.

The protein resides in the cytoplasm. It carries out the reaction (R)-pantoate + beta-alanine + ATP = (R)-pantothenate + AMP + diphosphate + H(+). It participates in cofactor biosynthesis; (R)-pantothenate biosynthesis; (R)-pantothenate from (R)-pantoate and beta-alanine: step 1/1. In terms of biological role, catalyzes the condensation of pantoate with beta-alanine in an ATP-dependent reaction via a pantoyl-adenylate intermediate. This is Pantothenate synthetase from Brucella anthropi (strain ATCC 49188 / DSM 6882 / CCUG 24695 / JCM 21032 / LMG 3331 / NBRC 15819 / NCTC 12168 / Alc 37) (Ochrobactrum anthropi).